The sequence spans 204 residues: dITP/XTP pyrophosphatase (204 aa).

11–16 (SRNRKK) contributes to the substrate binding site. Residue aspartate 76 is the Proton acceptor of the active site. Residue aspartate 76 participates in Mg(2+) binding. Substrate-binding positions include serine 77, 158-161 (FGYD), lysine 181, and 186-187 (HR).

The protein belongs to the HAM1 NTPase family. Homodimer. The cofactor is Mg(2+).

The catalysed reaction is XTP + H2O = XMP + diphosphate + H(+). It carries out the reaction dITP + H2O = dIMP + diphosphate + H(+). The enzyme catalyses ITP + H2O = IMP + diphosphate + H(+). Pyrophosphatase that catalyzes the hydrolysis of nucleoside triphosphates to their monophosphate derivatives, with a high preference for the non-canonical purine nucleotides XTP (xanthosine triphosphate), dITP (deoxyinosine triphosphate) and ITP. Seems to function as a house-cleaning enzyme that removes non-canonical purine nucleotides from the nucleotide pool, thus preventing their incorporation into DNA/RNA and avoiding chromosomal lesions. This is dITP/XTP pyrophosphatase from Mycobacterium tuberculosis (strain CDC 1551 / Oshkosh).